Reading from the N-terminus, the 55-residue chain is Large ribosomal subunit protein bL33 (55 aa).

Belongs to the bacterial ribosomal protein bL33 family.

This Novosphingobium aromaticivorans (strain ATCC 700278 / DSM 12444 / CCUG 56034 / CIP 105152 / NBRC 16084 / F199) protein is Large ribosomal subunit protein bL33.